Here is a 228-residue protein sequence, read N- to C-terminus: LexA repressor (228 aa).

Positions 26–46 (FDEMKDALDLRSKSGIHRLIT) form a DNA-binding region, H-T-H motif. Catalysis depends on for autocatalytic cleavage activity residues Ser-149 and Lys-187.

The protein belongs to the peptidase S24 family. Homodimer.

The catalysed reaction is Hydrolysis of Ala-|-Gly bond in repressor LexA.. Represses a number of genes involved in the response to DNA damage (SOS response), including recA and lexA. Has been shown to bind to the direct repeat sequence 5'-GTT-N(7)-GTTC-3'. In the presence of single-stranded DNA, RecA interacts with LexA causing an autocatalytic cleavage which disrupts the DNA-binding part of LexA, leading to derepression of the SOS regulon and eventually DNA repair. This is LexA repressor from Cereibacter sphaeroides (strain ATCC 17023 / DSM 158 / JCM 6121 / CCUG 31486 / LMG 2827 / NBRC 12203 / NCIMB 8253 / ATH 2.4.1.) (Rhodobacter sphaeroides).